The following is a 451-amino-acid chain: GTPase Der (451 aa).

EngA-type G domains follow at residues 5-170 and 186-359; these read PVVA…VEPE and IKLA…AAAF. GTP-binding positions include 11–18, 58–62, 122–125, 192–199, 239–243, and 304–307; these read GRPNVGKS, DTGGF, NKAE, DTAGL, and NKWD. The KH-like domain maps to 360-444; sequence AKLSTPKLTR…PLRIEFKSSR (85 aa).

It belongs to the TRAFAC class TrmE-Era-EngA-EngB-Septin-like GTPase superfamily. EngA (Der) GTPase family. As to quaternary structure, associates with the 50S ribosomal subunit.

In terms of biological role, GTPase that plays an essential role in the late steps of ribosome biogenesis. The chain is GTPase Der from Bordetella petrii (strain ATCC BAA-461 / DSM 12804 / CCUG 43448).